A 156-amino-acid polypeptide reads, in one-letter code: Transcription inhibitor protein Gfh1 (156 aa).

The stretch at 1–74 forms a coiled coil; sequence MAREVKLTKA…LEDILSRAVI (74 aa). The Zn(2+) site is built by Glu-20 and Glu-24.

This sequence belongs to the GreA/GreB family. As to quaternary structure, interacts with RNAP.

In terms of biological role, inhibits all catalytic activities of RNA polymerase (RNAP) by partially occluding its substrate-binding site and preventing NTP binding. This Thermus thermophilus (strain ATCC 27634 / DSM 579 / HB8) protein is Transcription inhibitor protein Gfh1 (gfh1).